The chain runs to 309 residues: Porphobilinogen deaminase (309 aa).

An S-(dipyrrolylmethanemethyl)cysteine modification is found at Cys-242.

It belongs to the HMBS family. In terms of assembly, monomer. Requires dipyrromethane as cofactor.

It catalyses the reaction 4 porphobilinogen + H2O = hydroxymethylbilane + 4 NH4(+). Its pathway is porphyrin-containing compound metabolism; protoporphyrin-IX biosynthesis; coproporphyrinogen-III from 5-aminolevulinate: step 2/4. Functionally, tetrapolymerization of the monopyrrole PBG into the hydroxymethylbilane pre-uroporphyrinogen in several discrete steps. The polypeptide is Porphobilinogen deaminase (Hamiltonella defensa subsp. Acyrthosiphon pisum (strain 5AT)).